A 286-amino-acid chain; its full sequence is MGTKLGVPNLWEILNKKKIKATFFFTVGPDNMGRHFWRLIKPKFLFKMFRINPFKIYGLNILRSGFIGKGKNIGKICKNEIKSASKDHEIGLHAWDHFSWQTWINMFSKKKIIKHINLGKNALQHIIKYPVTCFASPGWRTNEYVLRTLKNNFNFSYNSDCRGSNLFFPYLGDGKIGSLQIPVTLPTFDEVINIKTTIKKYNSFIIKLIKTQLNFSVYTIHAEIEGMKYKKEFEEFLNIAINEGINFCRLKDLIPKEIENIPIYKINHKTIPGRDGWIAYQQKIIK.

The NodB homology domain occupies 1–248; it reads MGTKLGVPNL…IAINEGINFC (248 aa).

Belongs to the polysaccharide deacetylase family. ArnD deformylase subfamily.

The catalysed reaction is 4-deoxy-4-formamido-alpha-L-arabinopyranosyl di-trans,octa-cis-undecaprenyl phosphate + H2O = 4-amino-4-deoxy-alpha-L-arabinopyranosyl di-trans,octa-cis-undecaprenyl phosphate + formate. The protein operates within glycolipid biosynthesis; 4-amino-4-deoxy-alpha-L-arabinose undecaprenyl phosphate biosynthesis; 4-amino-4-deoxy-alpha-L-arabinose undecaprenyl phosphate from UDP-4-deoxy-4-formamido-beta-L-arabinose and undecaprenyl phosphate: step 2/2. It functions in the pathway bacterial outer membrane biogenesis; lipopolysaccharide biosynthesis. Catalyzes the deformylation of 4-deoxy-4-formamido-L-arabinose-phosphoundecaprenol to 4-amino-4-deoxy-L-arabinose-phosphoundecaprenol. The modified arabinose is attached to lipid A and is required for resistance to polymyxin and cationic antimicrobial peptides. The protein is Probable 4-deoxy-4-formamido-L-arabinose-phosphoundecaprenol deformylase ArnD of Wigglesworthia glossinidia brevipalpis.